The following is a 106-amino-acid chain: Nucleoid-associated protein Smlt1015 (106 aa).

Residues 81-106 (IDAESKSKMGSATAGMQLPPGMKLPF) are disordered.

This sequence belongs to the YbaB/EbfC family. Homodimer.

Its subcellular location is the cytoplasm. The protein localises to the nucleoid. Its function is as follows. Binds to DNA and alters its conformation. May be involved in regulation of gene expression, nucleoid organization and DNA protection. This Stenotrophomonas maltophilia (strain K279a) protein is Nucleoid-associated protein Smlt1015.